Consider the following 123-residue polypeptide: UPF0102 protein PputW619_0932 (123 aa).

The protein belongs to the UPF0102 family.

The protein is UPF0102 protein PputW619_0932 of Pseudomonas putida (strain W619).